The sequence spans 617 residues: Melatonin-related receptor (617 aa).

Over 1–30 (MGPTLAVPTPYGCIGCKLPQPEYPPALIIF) the chain is Extracellular. Residues 31-51 (MFCAMVITIVVDLIGNSMVIL) form a helical membrane-spanning segment. Residues 52 to 64 (AVTKNKKLRNSGN) lie on the Cytoplasmic side of the membrane. The helical transmembrane segment at 65–85 (IFVVSLSVADMLVAIYPYPLM) threads the bilayer. Topologically, residues 86-103 (LHAMSIGGWDLSQLQCQM) are extracellular. The cysteines at positions 101 and 178 are disulfide-linked. A helical membrane pass occupies residues 104-124 (VGFITGLSVVGSIFNIVAIAI). The Cytoplasmic portion of the chain corresponds to 125-143 (NRYCYICHSLQYERIFSVR). The helical transmembrane segment at 144–164 (NTCIYLVITWIMTVLAVLPNM) threads the bilayer. The Extracellular portion of the chain corresponds to 165 to 188 (YIGTIEYDPRTYTCIFNYLNNPVF). A helical membrane pass occupies residues 189–209 (TVTIVCIHFVLPLLIVGFCYV). Topologically, residues 210–239 (RIWTKVLAARDPAGQNPDNQLAEVRNFLTM) are cytoplasmic. A helical membrane pass occupies residues 240–260 (FVIFLLFAVCWCPINVLTVLV). Residues 261–273 (AVSPKEMAGKIPN) are Extracellular-facing. Residues 274–294 (WLYLAAYFIAYFNSCLNAVIY) traverse the membrane as a helical segment. Residues 295–617 (GLLNENFRRE…VEDDPDEMAV (323 aa)) lie on the Cytoplasmic side of the membrane. 2 disordered regions span residues 340 to 438 (AHAR…ATVY) and 464 to 596 (SVHF…VTTS). Residues 341 to 353 (HARDQAREQDRAH) show a composition bias toward basic and acidic residues. A compositionally biased stretch (polar residues) spans 485–500 (GSHSKSAFSAATSHPK).

This sequence belongs to the G-protein coupled receptor 1 family. In terms of assembly, homodimer, and heterodimer with MTNR1A and MTNR1B. Interacts with KAT5. Interacts with RTN4 isoform A/NOGO-A. Interacts with TGFBR1. Interacts with GTF2I. Post-translationally, cleaved by CAPN1 in a calcium-dependent manner. Hypothalamus and pituitary.

The protein localises to the cell membrane. It localises to the postsynaptic density. Its subcellular location is the nucleus. Functionally, g protein-coupled receptor that plays a role in numerous physiological processes including regulation of energy metabolism, neurite outgrowth or cell migration. Promotes self-renewal and neuronal differentiation of neural progenitor cells through activation of the NOTCH and WNT/beta-catenin signaling pathways. Modulates the KAT5-dependent glucocorticoid receptor signaling by modulating KAT5 subcellular compartmentalisation. Also plays a role in the activation TGFBR1 in the absence of TGFBR2 by interfering with FKBP1A binding to TGFBR1, leading to induction of both canonical and non-canonical SMAD signaling pathways resulting in inhibition of proliferation or promotion of migration. Its function is as follows. Upon cleavage by CAPN1, functions as a scaffold in the nucleus for interacting partners such as GTF2I to promote FOS promoter activation. This chain is Melatonin-related receptor (GPR50), found in Homo sapiens (Human).